Here is a 1744-residue protein sequence, read N- to C-terminus: Myotubularin-related protein 5 (1744 aa).

Residues 14–150 (DTVAVIVLEE…IRFLTYELVE (137 aa)) enclose the uDENN domain. Positions 165–304 (ELGFELIPIS…YYNSLHQRLR (140 aa)) constitute a cDENN domain. In terms of domain architecture, dDENN spans 306–412 (VMFTTTSQED…LTRALPRRKH (107 aa)). Residues 787–871 (KGNFDPVLAH…LYSMESFKKL (85 aa)) form the GRAM domain. The Myotubularin phosphatase domain maps to 996–1447 (NAHIRYAVID…PQIHMWPFLA (452 aa)). The span at 1102-1116 (TGSMTGSQQTLHSKA) shows a compositional bias: polar residues. The disordered stretch occupies residues 1102 to 1123 (TGSMTGSQQTLHSKASSNEESS). The Phorbol-ester/DAG-type zinc-finger motif lies at 1540–1590 (IHELTPFTVGARPVQCCYCTNILTRWSKAVHCKKCRIHVHEGCVNRNITIG). A PH domain is found at 1643 to 1743 (PPLCTGYLSK…WKECIEQVIR (101 aa)).

It belongs to the protein-tyrosine phosphatase family. Non-receptor class myotubularin subfamily.

Its function is as follows. Probably acts as an adapter for other myotubularin-like phosphatases. The chain is Myotubularin-related protein 5 from Caenorhabditis elegans.